Consider the following 612-residue polypeptide: UvrABC system protein C (612 aa).

In terms of domain architecture, GIY-YIG spans 21 to 99 (KLPGVYQMYD…IKSQKPPFNI (79 aa)). One can recognise a UVR domain in the interval 209–244 (EVLQQELQVEMEQASQALDFERAVVVRDQITDLRQV).

This sequence belongs to the UvrC family. As to quaternary structure, interacts with UvrB in an incision complex.

Its subcellular location is the cytoplasm. Functionally, the UvrABC repair system catalyzes the recognition and processing of DNA lesions. UvrC both incises the 5' and 3' sides of the lesion. The N-terminal half is responsible for the 3' incision and the C-terminal half is responsible for the 5' incision. In Saccharophagus degradans (strain 2-40 / ATCC 43961 / DSM 17024), this protein is UvrABC system protein C.